We begin with the raw amino-acid sequence, 133 residues long: Small ribosomal subunit protein uS9 (133 aa).

Residues 98–113 (RKPLKTEGHLSRDPRA) show a composition bias toward basic and acidic residues. Positions 98 to 133 (RKPLKTEGHLSRDPRAKERRKYGLKKARKAPQFSKR) are disordered. Over residues 114–133 (KERRKYGLKKARKAPQFSKR) the composition is skewed to basic residues.

Belongs to the universal ribosomal protein uS9 family.

The chain is Small ribosomal subunit protein uS9 from Parasynechococcus marenigrum (strain WH8102).